A 159-amino-acid polypeptide reads, in one-letter code: U-actitoxin-Avd13a/b (159 aa).

An N-terminal signal peptide occupies residues Met-1–Ala-18. A propeptide spanning residues Gly-19–Pro-26 is cleaved from the precursor. Disulfide bonds link Cys-33/Cys-45 and Cys-36/Cys-52. A propeptide spanning residues Glu-59–Pro-60 is cleaved from the precursor. 2 disulfides stabilise this stretch: Cys-67–Cys-79 and Cys-70–Cys-86. Positions Glu-93–Pro-94 are excised as a propeptide. Cystine bridges form between Cys-101–Cys-113 and Cys-104–Cys-120. Positions Glu-127–Pro-128 are excised as a propeptide. 2 disulfides stabilise this stretch: Cys-135–Cys-147 and Cys-138–Cys-154.

Belongs to the sea anemone BBH family.

The protein localises to the secreted. The protein resides in the nematocyst. In terms of biological role, inhibits ion channels. The protein is U-actitoxin-Avd13a/b of Anemonia viridis (Snakelocks anemone).